The primary structure comprises 485 residues: Cobyric acid synthase (485 aa).

The GATase cobBQ-type domain occupies 250-436 (RRIVACPILP…IHGLLASPAL (187 aa)). The Nucleophile role is filled by Cys-332. His-428 is an active-site residue.

Belongs to the CobB/CobQ family. CobQ subfamily.

The protein operates within cofactor biosynthesis; adenosylcobalamin biosynthesis. Catalyzes amidations at positions B, D, E, and G on adenosylcobyrinic A,C-diamide. NH(2) groups are provided by glutamine, and one molecule of ATP is hydrogenolyzed for each amidation. This is Cobyric acid synthase from Sphingopyxis alaskensis (strain DSM 13593 / LMG 18877 / RB2256) (Sphingomonas alaskensis).